The chain runs to 190 residues: Elongation factor P 2 (190 aa).

The protein belongs to the elongation factor P family.

It localises to the cytoplasm. Its pathway is protein biosynthesis; polypeptide chain elongation. In terms of biological role, involved in peptide bond synthesis. Stimulates efficient translation and peptide-bond synthesis on native or reconstituted 70S ribosomes in vitro. Probably functions indirectly by altering the affinity of the ribosome for aminoacyl-tRNA, thus increasing their reactivity as acceptors for peptidyl transferase. In Chlamydia pneumoniae (Chlamydophila pneumoniae), this protein is Elongation factor P 2 (efp2).